Here is a 569-residue protein sequence, read N- to C-terminus: Mitogen-activated protein kinase 8 (569 aa).

Residues 13 to 304 (YKIQEVIGKG…AEEALADPYF (292 aa)) enclose the Protein kinase domain. Residues 19 to 27 (IGKGSYGVV) and Lys42 each bind ATP. The active-site Proton acceptor is the Asp139. Phosphothreonine is present on Thr175. The short motif at 175–177 (TDY) is the TXY element. Tyr177 bears the Phosphotyrosine mark. The interval 404–432 (TTVHSAPIPPKDHQNITSQVPQRIPGRTG) is disordered.

The protein belongs to the protein kinase superfamily. CMGC Ser/Thr protein kinase family. MAP kinase subfamily. Post-translationally, dually phosphorylated on Thr-175 and Tyr-177, which activates the enzyme. As to expression, expressed in leaves and panicles.

It catalyses the reaction L-seryl-[protein] + ATP = O-phospho-L-seryl-[protein] + ADP + H(+). It carries out the reaction L-threonyl-[protein] + ATP = O-phospho-L-threonyl-[protein] + ADP + H(+). Its activity is regulated as follows. Activated by threonine and tyrosine phosphorylation. The sequence is that of Mitogen-activated protein kinase 8 (MPK8) from Oryza sativa subsp. japonica (Rice).